Here is a 346-residue protein sequence, read N- to C-terminus: GTPase Obg (346 aa).

Residues 1–159 (MRFVDRCRLK…RELRLELKVL (159 aa)) form the Obg domain. The interval 122–147 (KGGRGNLHFKSPHDRAPRRAEPGEPG) is disordered. Residues 132-147 (SPHDRAPRRAEPGEPG) are compositionally biased toward basic and acidic residues. Residues 160–336 (ADVGLLGFPN…LVRELAALAR (177 aa)) form the OBG-type G domain. GTP contacts are provided by residues 166 to 173 (GFPNAGKS), 191 to 195 (FTTLT), 218 to 221 (DIPG), 288 to 291 (TKAD), and 317 to 319 (SAA). Positions 173 and 193 each coordinate Mg(2+).

The protein belongs to the TRAFAC class OBG-HflX-like GTPase superfamily. OBG GTPase family. In terms of assembly, monomer. The cofactor is Mg(2+).

The protein localises to the cytoplasm. Its function is as follows. An essential GTPase which binds GTP, GDP and possibly (p)ppGpp with moderate affinity, with high nucleotide exchange rates and a fairly low GTP hydrolysis rate. Plays a role in control of the cell cycle, stress response, ribosome biogenesis and in those bacteria that undergo differentiation, in morphogenesis control. The sequence is that of GTPase Obg from Sorangium cellulosum (strain So ce56) (Polyangium cellulosum (strain So ce56)).